The primary structure comprises 95 residues: Osteocalcin 1 (95 aa).

A signal peptide spans 1–21 (MKTLSVLVLCSLAVLCLTSDA). Residues 22 to 50 (SFSSQPAVDTPAQEGLFVEQEQASSVVRQ) constitute a propeptide that is removed on maturation. Positions 45-91 (SSVVRQAPKELSLSQLESLREVCELNLACEDMMDTSGIIAAYTTYYG) constitute a Gla domain. E61, E65, and E68 together coordinate Ca(2+). 4-carboxyglutamate is present on residues E61, E65, and E68. A disulfide bridge links C67 with C73.

The protein belongs to the osteocalcin/matrix Gla protein family. In terms of processing, gamma-carboxyglutamate residues are formed by vitamin K dependent carboxylation by GGCX. These residues are essential for the binding of calcium.

The protein resides in the secreted. In terms of biological role, the carboxylated form is one of the main organic components of the bone matrix, which constitutes 1-2% of the total bone protein. The carboxylated form binds strongly to apatite and calcium. The polypeptide is Osteocalcin 1 (Solea senegalensis (Senegalese sole)).